Reading from the N-terminus, the 305-residue chain is UDP-N-acetylenolpyruvoylglucosamine reductase (305 aa).

Residues 22 to 190 form the FAD-binding PCMH-type domain; that stretch reads KVGGAADFFA…LSARFRLQAG (169 aa). The active site involves Arg-169. Ser-220 (proton donor) is an active-site residue. Residue Glu-290 is part of the active site.

Belongs to the MurB family. It depends on FAD as a cofactor.

The protein localises to the cytoplasm. The enzyme catalyses UDP-N-acetyl-alpha-D-muramate + NADP(+) = UDP-N-acetyl-3-O-(1-carboxyvinyl)-alpha-D-glucosamine + NADPH + H(+). It functions in the pathway cell wall biogenesis; peptidoglycan biosynthesis. Cell wall formation. This is UDP-N-acetylenolpyruvoylglucosamine reductase from Synechococcus sp. (strain RCC307).